The following is a 216-amino-acid chain: Thiamine-phosphate synthase (216 aa).

4-amino-2-methyl-5-(diphosphooxymethyl)pyrimidine contacts are provided by residues 41–45 (QYREK) and Asn73. Residues Asp74 and Asp93 each coordinate Mg(2+). 4-amino-2-methyl-5-(diphosphooxymethyl)pyrimidine is bound at residue Ser111. 2-[(2R,5Z)-2-carboxy-4-methylthiazol-5(2H)-ylidene]ethyl phosphate is bound at residue 137-139 (TTT). A 4-amino-2-methyl-5-(diphosphooxymethyl)pyrimidine-binding site is contributed by Lys140. 2-[(2R,5Z)-2-carboxy-4-methylthiazol-5(2H)-ylidene]ethyl phosphate contacts are provided by residues Gly168 and 188–189 (VS).

This sequence belongs to the thiamine-phosphate synthase family. It depends on Mg(2+) as a cofactor.

The catalysed reaction is 2-[(2R,5Z)-2-carboxy-4-methylthiazol-5(2H)-ylidene]ethyl phosphate + 4-amino-2-methyl-5-(diphosphooxymethyl)pyrimidine + 2 H(+) = thiamine phosphate + CO2 + diphosphate. It catalyses the reaction 2-(2-carboxy-4-methylthiazol-5-yl)ethyl phosphate + 4-amino-2-methyl-5-(diphosphooxymethyl)pyrimidine + 2 H(+) = thiamine phosphate + CO2 + diphosphate. It carries out the reaction 4-methyl-5-(2-phosphooxyethyl)-thiazole + 4-amino-2-methyl-5-(diphosphooxymethyl)pyrimidine + H(+) = thiamine phosphate + diphosphate. Its pathway is cofactor biosynthesis; thiamine diphosphate biosynthesis; thiamine phosphate from 4-amino-2-methyl-5-diphosphomethylpyrimidine and 4-methyl-5-(2-phosphoethyl)-thiazole: step 1/1. Its function is as follows. Condenses 4-methyl-5-(beta-hydroxyethyl)thiazole monophosphate (THZ-P) and 2-methyl-4-amino-5-hydroxymethyl pyrimidine pyrophosphate (HMP-PP) to form thiamine monophosphate (TMP). The polypeptide is Thiamine-phosphate synthase (Chloroflexus aurantiacus (strain ATCC 29366 / DSM 635 / J-10-fl)).